The primary structure comprises 392 residues: MENVVIIRYGEIMLKGNNKRFFEDKLVKQIRHALSDLGKLKVYKAHSRIYVDVDAYDVADITDRVKKVFGVVSLSVAKRFEVDMDRIKEVVLEEIKDRMLENPGIKTFKMESKRGDKRFPMQSLEISRELGGHVLENIENISVDVHHPDVSIHVEIRDQAFVFSNKISGFGGLPLGTNGKALLLLSGGIDSPVAGWMVGKRGVDIEAIHFHSYPFTSDRAKEKVMDLAKILSGYCGAFKLYSVNLLPIQKEINEKCPEEEMTILSRRFMMKIAERVALQNDCDALVTGESIGQVASQTVKSLNVTNSAVDLPVFRPLIAMDKVDIIDLSQKIETYETSILPFEDCCTVFLPKHPVTQPKLEKILQSESKLDVEALISAALEALEVEKISIED.

The THUMP domain occupies 59 to 167; the sequence is ADITDRVKKV…DQAFVFSNKI (109 aa). ATP-binding positions include 184-185, 209-210, Arg-266, Gly-288, and Gln-297; these read LL and HF.

This sequence belongs to the ThiI family.

It localises to the cytoplasm. It carries out the reaction [ThiI sulfur-carrier protein]-S-sulfanyl-L-cysteine + a uridine in tRNA + 2 reduced [2Fe-2S]-[ferredoxin] + ATP + H(+) = [ThiI sulfur-carrier protein]-L-cysteine + a 4-thiouridine in tRNA + 2 oxidized [2Fe-2S]-[ferredoxin] + AMP + diphosphate. It catalyses the reaction [ThiS sulfur-carrier protein]-C-terminal Gly-Gly-AMP + S-sulfanyl-L-cysteinyl-[cysteine desulfurase] + AH2 = [ThiS sulfur-carrier protein]-C-terminal-Gly-aminoethanethioate + L-cysteinyl-[cysteine desulfurase] + A + AMP + 2 H(+). It functions in the pathway cofactor biosynthesis; thiamine diphosphate biosynthesis. Catalyzes the ATP-dependent transfer of a sulfur to tRNA to produce 4-thiouridine in position 8 of tRNAs, which functions as a near-UV photosensor. Also catalyzes the transfer of sulfur to the sulfur carrier protein ThiS, forming ThiS-thiocarboxylate. This is a step in the synthesis of thiazole, in the thiamine biosynthesis pathway. The sulfur is donated as persulfide by IscS. This chain is Probable tRNA sulfurtransferase, found in Alkaliphilus oremlandii (strain OhILAs) (Clostridium oremlandii (strain OhILAs)).